Here is a 333-residue protein sequence, read N- to C-terminus: MTGNSFNSMKDFLKQTGGYAVIDGGLATEFERHGADLNDPLWSAKCLVTSPHLIHTVHLDYLEAGADIISSASYQATIQGFEAKGFSREESESLLKKSVEIATEARNSYYDKCGTSSSMDDKILKKRPILVAASVGSYGAYLADGSEYSGIYGDSITLEKLKDFHRRRLQVLAESGADLIAFETIPNKIEAQAFADLLEEGDVKIPGWFSFNSKDGVNVVSGDSIKECISIAENCEKVVAVGINCTPPRFIEGLVLEIEKVTSKPILVYPNSGESYDADRKEWVENTGVGDEDFVSYVEKWMDAGVSLLGGCCRTTPTTIRAIHKRLVNRRSL.

The 320-residue stretch at 8–327 folds into the Hcy-binding domain; the sequence is SMKDFLKQTG…TTIRAIHKRL (320 aa). Zn(2+)-binding residues include C245, C312, and C313.

In terms of assembly, monomer. The cofactor is Zn(2+). As to expression, expressed predominantly in roots. Expressed in rosette leaves, cauline leaves and developing seeds.

It carries out the reaction S-methyl-L-methionine + L-homocysteine = 2 L-methionine + H(+). Catalyzes methyl transfer from S-methylmethionine (SMM) to adenosyl-L-homocysteine (AdoMet). SMM degradation (by HMT-1, HMT-2 and HMT-3) and biosynthesis (by MMT1) constitute the SMM cycle in plants, which is probably required to achieve short term control of AdoMet level. The polypeptide is Homocysteine S-methyltransferase 2 (HMT-2) (Arabidopsis thaliana (Mouse-ear cress)).